The sequence spans 242 residues: uncharacterized protein (242 aa).

A Response regulatory domain is found at 3–116 (TALVIDDEPF…RLRKTVKRLS (114 aa)). Aspartate 54 is subject to 4-aspartylphosphate. The 102-residue stretch at 139 to 240 (IPCIGHNRIV…LKLLKEMLGL (102 aa)) folds into the HTH LytTR-type domain.

This is an uncharacterized protein from Vibrio vulnificus (strain CMCP6).